The sequence spans 212 residues: MNLLIMGLPGAGKGTQAAKIVEEFGVAHISTGDMFRAAMANQTEMGRLAKSYIDKGELVPDEVTNGIVKERLAEDDIAEKGFLLDGYPRTIEQAHALDATLEELGLRLDGVINIKVDPSCLVERLSGRIINRKTGETFHKVFNPPVDYKEEDYYQREDDKPETVKRRLDVNMAQGEPILEHYRKLDLVTDIEGNQEITDVFADVEKALLELK.

10 to 15 lines the ATP pocket; that stretch reads GAGKGT. Residues 30–59 form an NMP region; it reads STGDMFRAAMANQTEMGRLAKSYIDKGELV. AMP-binding positions include T31, R36, 57–59, 86–89, and Q93; these read ELV and GYPR. An LID region spans residues 127 to 159; that stretch reads GRIINRKTGETFHKVFNPPVDYKEEDYYQREDD. Residues R128 and 137 to 138 each bind ATP; that span reads TF. AMP-binding residues include R156 and R167. Q195 contacts ATP.

This sequence belongs to the adenylate kinase family. In terms of assembly, monomer.

It is found in the cytoplasm. The enzyme catalyses AMP + ATP = 2 ADP. The protein operates within purine metabolism; AMP biosynthesis via salvage pathway; AMP from ADP: step 1/1. Catalyzes the reversible transfer of the terminal phosphate group between ATP and AMP. Plays an important role in cellular energy homeostasis and in adenine nucleotide metabolism. The chain is Adenylate kinase from Streptococcus pyogenes serotype M5 (strain Manfredo).